Here is a 335-residue protein sequence, read N- to C-terminus: Pregnancy-specific beta-1-glycoprotein 11 (335 aa).

The first 34 residues, 1–34, serve as a signal peptide directing secretion; the sequence is MGPLSAPPCTEHIKWKGLLLTALLLNFWNLPTTA. The Ig-like V-type domain maps to 35-144; that stretch reads QVMIEAQPPK…TGYFTFTLYL (110 aa). Residues asparagine 61, asparagine 104, and asparagine 111 are each glycosylated (N-linked (GlcNAc...) asparagine). The Cell attachment site motif lies at 127–129; sequence RGD. Ig-like C2-type domains lie at 147–234 and 242–317; these read PKPS…VTLN and PRIF…TSLT. Disulfide bonds link cysteine 169/cysteine 217 and cysteine 261/cysteine 301.

This sequence belongs to the immunoglobulin superfamily. CEA family.

The protein localises to the secreted. The protein is Pregnancy-specific beta-1-glycoprotein 11 (PSG11) of Homo sapiens (Human).